The primary structure comprises 211 residues: Mediator of RNA polymerase II transcription subunit 18 (211 aa).

The protein belongs to the Mediator complex subunit 18 family. Component of the Mediator complex.

The protein resides in the nucleus. Component of the Mediator complex, a coactivator involved in the regulated transcription of nearly all RNA polymerase II-dependent genes. Mediator functions as a bridge to convey information from gene-specific regulatory proteins to the basal RNA polymerase II transcription machinery. Mediator is recruited to promoters by direct interactions with regulatory proteins and serves as a scaffold for the assembly of a functional preinitiation complex with RNA polymerase II and the general transcription factors. This Anopheles gambiae (African malaria mosquito) protein is Mediator of RNA polymerase II transcription subunit 18 (MED18).